The following is a 355-amino-acid chain: Glutamyl aminopeptidase (355 aa).

His65 and Asp181 together coordinate a divalent metal cation. Catalysis depends on Glu213, which acts as the Proton acceptor. A divalent metal cation contacts are provided by Glu214, Asp236, and His319.

It belongs to the peptidase M42 family. A divalent metal cation serves as cofactor.

The enzyme catalyses Release of N-terminal glutamate (and to a lesser extent aspartate) from a peptide.. This is Glutamyl aminopeptidase (pepA) from Lactococcus lactis subsp. cremoris (strain MG1363).